The sequence spans 243 residues: NAD(P)H-quinone oxidoreductase subunit K, chloroplastic (243 aa).

Cys-65, Cys-66, Cys-130, and Cys-161 together coordinate [4Fe-4S] cluster.

Belongs to the complex I 20 kDa subunit family. In terms of assembly, NDH is composed of at least 16 different subunits, 5 of which are encoded in the nucleus. It depends on [4Fe-4S] cluster as a cofactor.

The protein localises to the plastid. It localises to the chloroplast thylakoid membrane. The enzyme catalyses a plastoquinone + NADH + (n+1) H(+)(in) = a plastoquinol + NAD(+) + n H(+)(out). It catalyses the reaction a plastoquinone + NADPH + (n+1) H(+)(in) = a plastoquinol + NADP(+) + n H(+)(out). Functionally, NDH shuttles electrons from NAD(P)H:plastoquinone, via FMN and iron-sulfur (Fe-S) centers, to quinones in the photosynthetic chain and possibly in a chloroplast respiratory chain. The immediate electron acceptor for the enzyme in this species is believed to be plastoquinone. Couples the redox reaction to proton translocation, and thus conserves the redox energy in a proton gradient. The chain is NAD(P)H-quinone oxidoreductase subunit K, chloroplastic from Marchantia polymorpha (Common liverwort).